Consider the following 472-residue polypeptide: FAD-linked oxidoreductase azaL (472 aa).

Residues 1-18 form the signal peptide; the sequence is MFRTILLCSLGLTTLSSA. Residues N22, N44, N102, N123, N227, N246, N273, N305, N318, N390, and N415 are each glycosylated (N-linked (GlcNAc...) asparagine). Residues 54 to 228 form the FAD-binding PCMH-type domain; sequence TTYDAPTYIG…TSATYKIYNA (175 aa).

Belongs to the oxygen-dependent FAD-linked oxidoreductase family.

It functions in the pathway secondary metabolite biosynthesis. Its function is as follows. FAD-linked oxidoreductase; part of the gene cluster that mediates the biosynthesis of azaphilones, a class of fungal metabolites characterized by a highly oxygenated pyrano-quinone bicyclic core and exhibiting a broad range of bioactivities. In the first step, the non-reducing polyketide synthase azaA forms the hexaketide precursor from successive condensations of five malonyl-CoA units, presumably with a simple acetyl-CoA starter unit. The reactive polyketide chain then undergoes a PT-mediated C2-C7 cyclization to afford the aromatic ring and is eventually released as an aldehyde through the R-domain. The putative ketoreductase azaE is proposed to catalyze the reduction of the terminal ketone resulting in the early culture product FK17-P2a. The monooxygenase azaH was demonstrated to be the only enzyme required to convert FK17-P2a to azanigerone E. AzaH first hydroxylates the benzaldehyde intermediate FK17-P2a at C4, which triggers the formation of the pyran-ring to afford azanigerone E. In parallel, the 2,4-dimethylhexanoyl chain is synthesized by the HR-PKS azaB and is proposed to be transferred to the C4-hydroxyl of azanigerone E by the acyltransferase azaD directly from the ACP domain of azaB. Alternatively, the 2,4-dimethyl-hexanoyl chain may be offloaded from the HR-PKS as a carboxylic acid and converted to an acyl-CoA by azaF. The resulting acyl-CoA molecule could then be taken up as a substrate by AzaD to form azanigerone B. To yield the carboxylic acid substituent in azanigerone A, the hydroxypropyl side chain of azanigerone B would need to undergo a C-C oxidative cleavage catalyzed by cytochrome P450 AzaI. AzaI is proposed to act on a vicinal diol that leads to a C-C bond scission either through an alkoxyradical intermediate or a peroxy complex. In the biosynthesis of azanigerone A, azanigerone B first undergoes hydroxylation at C10, possibly catalyzed by one of the two FAD-dependent monooxygenases encoded in the cluster, azaG or azaL, resulting in the vicinal diol azanigerone C. Oxidative cleavage of azanigerone C by azaI would yield the corresponding aldehyde derivative of azanigerone A. Finally, the dehydrogenase azaJ is proposed to convert the aldehyde functional group into the carboxylic acid, completing the conversion from azanigerone B to azanigerone A. Alternatively, the oxidation of aldehyde to carboxylic acid may be catalyzed by the same P450 enzyme azaI via consecutive oxidation or by endogenous alcohol dehydrogenase. The polypeptide is FAD-linked oxidoreductase azaL (Aspergillus niger (strain ATCC 1015 / CBS 113.46 / FGSC A1144 / LSHB Ac4 / NCTC 3858a / NRRL 328 / USDA 3528.7)).